Consider the following 183-residue polypeptide: Dual-action ribosomal maturation protein DarP (183 aa).

Belongs to the DarP family.

It localises to the cytoplasm. In terms of biological role, member of a network of 50S ribosomal subunit biogenesis factors which assembles along the 30S-50S interface, preventing incorrect 23S rRNA structures from forming. Promotes peptidyl transferase center (PTC) maturation. The polypeptide is Dual-action ribosomal maturation protein DarP (Klebsiella pneumoniae (strain 342)).